Here is a 57-residue protein sequence, read N- to C-terminus: uncharacterized protein (57 aa).

Its function is as follows. Proetin of unknown function whose overexpression causes growth inhibition. Overexpression increases the expression of ergosterol synthesis genes. This is an uncharacterized protein from Saccharomyces cerevisiae (strain ATCC 204508 / S288c) (Baker's yeast).